A 740-amino-acid chain; its full sequence is MEQTYEYAWIIPFIPLPVPMLIGAGLILFPTATKSFRRMWAFQSVLLLSIVMVFSIYLSIQQINSRSFYQYVWSWIINNDFSLEFGYLIDPLTSIMSILITTVGIMVLIYSDNYMAHDQGYLRFFAYMSFFSTSMLGLVTSSNLIQIYIFWELVGLCSYLLIGFWFTRPVAANACQKAFVTNRVGDFGLLLGILGFYWITGSFEFRNFFEIFNNLIYNNEVDFLFVTLCAVLLFAGAVAKSAQFPLHVWLPDAMEGPTPISALIHAATMVAAGIFLVARLLPLFRVIPYIMYLISVIGIITVLLGATLALAQKDIKRGLAYSTMSQLGYMMLALGMGSYRSALFHLITHAYSKALLFLGSGSIIHSMETIVGYSPAKSQNMGLMGGLRKHVPITKITFLLGTLSLCGIPPLACFWSKDEILNDSWLYSPIFAIIAWATAGLTAFYMFRIYLLTFEGHLNVHFKNYGGKQKTPFYSISLWGKNGVKKNSCLLTMNNNESTYFFSKTKYPLDKNGRKMTRPFMTIAHFEHKAVYSYPYESDNTMLFPIFVLGLFTLFVGSLGIPFNQEGGNLDILSKWLAPSINLLHQKSNNSMDWNEFLKDAVLSVSIAYFGIFIASFLYKPIYSSLKNFELINSFVKKGPKRILWDKIINGIYDWSYNRAYIDAFYTRFLVGGIRGLAEFTHFFDRRVIDGMTNGVGVISFIVGEGIKYIGGGRISSYLFLYLAYVLVFLLVYYLLFSTF.

A run of 16 helical transmembrane segments spans residues 9–29, 40–60, 89–109, 125–145, 147–167, 185–205, 219–239, 258–278, 286–306, 327–347, 354–374, 396–416, 425–445, 543–563, 602–622, and 717–737; these read WIIPFIPLPVPMLIGAGLILF, WAFQSVLLLSIVMVFSIYLSI, IDPLTSIMSILITTVGIMVLI, FAYMSFFSTSMLGLVTSSNLI, IYIFWELVGLCSYLLIGFWFT, GDFGLLLGILGFYWITGSFEF, NEVDFLFVTLCAVLLFAGAVA, TPISALIHAATMVAAGIFLVA, VIPYIMYLISVIGIITVLLGA, LGYMMLALGMGSYRSALFHLI, ALLFLGSGSIIHSMETIVGYS, ITFLLGTLSLCGIPPLACFWS, WLYSPIFAIIAWATAGLTAFY, LFPIFVLGLFTLFVGSLGIPF, VLSVSIAYFGIFIASFLYKPI, and SYLFLYLAYVLVFLLVYYLLF.

This sequence belongs to the complex I subunit 5 family. As to quaternary structure, NDH is composed of at least 16 different subunits, 5 of which are encoded in the nucleus.

It localises to the plastid. It is found in the chloroplast thylakoid membrane. It carries out the reaction a plastoquinone + NADH + (n+1) H(+)(in) = a plastoquinol + NAD(+) + n H(+)(out). It catalyses the reaction a plastoquinone + NADPH + (n+1) H(+)(in) = a plastoquinol + NADP(+) + n H(+)(out). NDH shuttles electrons from NAD(P)H:plastoquinone, via FMN and iron-sulfur (Fe-S) centers, to quinones in the photosynthetic chain and possibly in a chloroplast respiratory chain. The immediate electron acceptor for the enzyme in this species is believed to be plastoquinone. Couples the redox reaction to proton translocation, and thus conserves the redox energy in a proton gradient. The polypeptide is NAD(P)H-quinone oxidoreductase subunit 5, chloroplastic (ndhF) (Nicotiana tomentosiformis (Tobacco)).